Reading from the N-terminus, the 155-residue chain is S-ribosylhomocysteine lyase (155 aa).

His-58, His-62, and Cys-125 together coordinate Fe cation.

It belongs to the LuxS family. In terms of assembly, homodimer. Fe cation serves as cofactor.

It carries out the reaction S-(5-deoxy-D-ribos-5-yl)-L-homocysteine = (S)-4,5-dihydroxypentane-2,3-dione + L-homocysteine. Its function is as follows. Involved in the synthesis of autoinducer 2 (AI-2) which is secreted by bacteria and is used to communicate both the cell density and the metabolic potential of the environment. The regulation of gene expression in response to changes in cell density is called quorum sensing. Catalyzes the transformation of S-ribosylhomocysteine (RHC) to homocysteine (HC) and 4,5-dihydroxy-2,3-pentadione (DPD). The polypeptide is S-ribosylhomocysteine lyase (Helicobacter pylori (strain HPAG1)).